An 89-amino-acid chain; its full sequence is Putative regulatory protein Dalk_1931 (89 aa).

It belongs to the RemA family.

This is Putative regulatory protein Dalk_1931 from Desulfatibacillum aliphaticivorans.